The chain runs to 273 residues: Shikimate dehydrogenase (NADP(+)) (273 aa).

Residues 15-17 and Thr-62 contribute to the shikimate site; that span reads SQS. Catalysis depends on Lys-66, which acts as the Proton acceptor. Position 78 (Glu-78) interacts with NADP(+). Shikimate is bound by residues Asn-87 and Asp-102. NADP(+)-binding positions include 127 to 131, 151 to 156, and Met-215; these read GAGGA and NRTVTK. A shikimate-binding site is contributed by Tyr-217. Residue Gly-239 participates in NADP(+) binding.

The protein belongs to the shikimate dehydrogenase family. As to quaternary structure, homodimer.

It carries out the reaction shikimate + NADP(+) = 3-dehydroshikimate + NADPH + H(+). It functions in the pathway metabolic intermediate biosynthesis; chorismate biosynthesis; chorismate from D-erythrose 4-phosphate and phosphoenolpyruvate: step 4/7. In terms of biological role, involved in the biosynthesis of the chorismate, which leads to the biosynthesis of aromatic amino acids. Catalyzes the reversible NADPH linked reduction of 3-dehydroshikimate (DHSA) to yield shikimate (SA). This Laribacter hongkongensis (strain HLHK9) protein is Shikimate dehydrogenase (NADP(+)).